A 291-amino-acid chain; its full sequence is Energy-coupling factor transporter ATP-binding protein EcfA2 (291 aa).

The ABC transporter domain maps to 3–246 (ITFKDVSYTY…PEWLTSKQLG (244 aa)). 40 to 47 (GHTGSGKS) contributes to the ATP binding site.

It belongs to the ABC transporter superfamily. Energy-coupling factor EcfA family. As to quaternary structure, forms a stable energy-coupling factor (ECF) transporter complex composed of 2 membrane-embedded substrate-binding proteins (S component), 2 ATP-binding proteins (A component) and 2 transmembrane proteins (T component).

The protein resides in the cell membrane. ATP-binding (A) component of a common energy-coupling factor (ECF) ABC-transporter complex. Unlike classic ABC transporters this ECF transporter provides the energy necessary to transport a number of different substrates. In Latilactobacillus sakei subsp. sakei (strain 23K) (Lactobacillus sakei subsp. sakei), this protein is Energy-coupling factor transporter ATP-binding protein EcfA2.